The primary structure comprises 707 residues: DNA ligase (707 aa).

Residues 36–40 (DADFD), 85–86 (SL), and glutamate 116 contribute to the NAD(+) site. Lysine 118 (N6-AMP-lysine intermediate) is an active-site residue. Arginine 139, glutamate 180, lysine 298, and lysine 322 together coordinate NAD(+). Residues cysteine 416, cysteine 419, cysteine 434, and cysteine 440 each contribute to the Zn(2+) site. In terms of domain architecture, BRCT spans 613–707 (AASSKIAGRS…STHVDPERMV (95 aa)).

This sequence belongs to the NAD-dependent DNA ligase family. LigA subfamily. Requires Mg(2+) as cofactor. It depends on Mn(2+) as a cofactor.

The catalysed reaction is NAD(+) + (deoxyribonucleotide)n-3'-hydroxyl + 5'-phospho-(deoxyribonucleotide)m = (deoxyribonucleotide)n+m + AMP + beta-nicotinamide D-nucleotide.. Its function is as follows. DNA ligase that catalyzes the formation of phosphodiester linkages between 5'-phosphoryl and 3'-hydroxyl groups in double-stranded DNA using NAD as a coenzyme and as the energy source for the reaction. It is essential for DNA replication and repair of damaged DNA. The protein is DNA ligase of Nitrosospira multiformis (strain ATCC 25196 / NCIMB 11849 / C 71).